A 517-amino-acid polypeptide reads, in one-letter code: ATP synthase subunit alpha 2 (517 aa).

Position 173 to 180 (173 to 180) interacts with ATP; sequence GDRQTGKT.

Belongs to the ATPase alpha/beta chains family. F-type ATPases have 2 components, CF(1) - the catalytic core - and CF(0) - the membrane proton channel. CF(1) has five subunits: alpha(3), beta(3), gamma(1), delta(1), epsilon(1). CF(0) has three main subunits: a(1), b(2) and c(9-12). The alpha and beta chains form an alternating ring which encloses part of the gamma chain. CF(1) is attached to CF(0) by a central stalk formed by the gamma and epsilon chains, while a peripheral stalk is formed by the delta and b chains.

Its subcellular location is the cell inner membrane. The enzyme catalyses ATP + H2O + 4 H(+)(in) = ADP + phosphate + 5 H(+)(out). In terms of biological role, produces ATP from ADP in the presence of a proton gradient across the membrane. The alpha chain is a regulatory subunit. This chain is ATP synthase subunit alpha 2, found in Legionella pneumophila (strain Corby).